A 36-amino-acid chain; its full sequence is U-limacoditoxin(7)-Dv63 (36 aa).

Positions 1 to 19 are cleaved as a signal peptide; that stretch reads MFKPRVILLITIIAVFSEF.

The protein belongs to the limacoditoxin-7 family. Expressed by the venom secretory cell of the spine. The spine is a cuticular structure containing a single large nucleated venom-secreting cell at its base. It is an independent unit capable of producing, storing and injecting venom. On the back of D.vulnerans caterpillars, spines are grouped together by 50 to 100 to form scoli, of which there are eight in D.vulnerans.

Its subcellular location is the secreted. Functionally, peptide with insecticidal and antiparasitic activities. Induces irreversible paralysis in D.melanogaster when tested at high doses. It shows a moderate antiparasitic activity against the major pathogenic nematode of ruminants (H.contortus, EC(50)=41.3 uM). Does not show antimicrobial activities. Does not induce increase in intracellular calcium in mouse DRG neurons, suggesting that it does not induce pain. The chain is U-limacoditoxin(7)-Dv63 from Doratifera vulnerans (Mottled cup moth).